A 1188-amino-acid chain; its full sequence is Integrin alpha-11 (1188 aa).

An N-terminal signal peptide occupies residues 1 to 22 (MDFPRGLLVAWTLSLWPGFTDT). Residues 23 to 1141 (FNMDTRNPRV…ISKQEDWQVP (1119 aa)) lie on the Extracellular side of the membrane. 2 FG-GAP repeats span residues 24–85 (NMDT…NCTK) and 91–151 (VTLS…FSKT). Cys-76 and Cys-83 are disulfide-bonded. 2 N-linked (GlcNAc...) asparagine glycosylation sites follow: Asn-82 and Asn-95. Intrachain disulfides connect Cys-121/Cys-139 and Cys-129/Cys-159. The VWFA domain maps to 164-345 (DIVIVLDGSN…AALKDIVDAL (182 aa)). Asn-291, Asn-331, Asn-358, Asn-449, and Asn-462 each carry an N-linked (GlcNAc...) asparagine glycan. FG-GAP repeat units follow at residues 355–406 (TNKN…VIPH), 411–461 (LKEF…SMHN), 462–527 (NRSL…RFVY), 528–586 (NGTL…NILK), and 590–650 (QRIT…FEPS). Asp-488, Asn-490, Asp-492, and Asp-496 together coordinate Ca(2+). N-linked (GlcNAc...) asparagine glycosylation occurs at Asn-528. Positions 551, 553, 555, 559, 613, 615, 617, and 621 each coordinate Ca(2+). Asn-642 carries an N-linked (GlcNAc...) asparagine glycan. Disulfide bonds link Cys-659–Cys-668, Cys-674–Cys-729, and Cys-781–Cys-787. The N-linked (GlcNAc...) asparagine glycan is linked to Asn-694. N-linked (GlcNAc...) asparagine glycosylation is present at Asn-857. Cys-881 and Cys-893 form a disulfide bridge. Asn-894, Asn-973, Asn-1031, Asn-1039, and Asn-1059 each carry an N-linked (GlcNAc...) asparagine glycan. Residues 1142 to 1164 (IWIIVGSTLGGLLLLALLVLALW) traverse the membrane as a helical segment. The Cytoplasmic segment spans residues 1165–1188 (KLGFFKSAKRKREPGLGPIPKELK).

The protein belongs to the integrin alpha chain family. Heterodimer of an alpha and a beta subunit. Alpha-11 associates with beta-1. Interacts with RAB21.

Its subcellular location is the membrane. Functionally, integrin alpha-11/beta-1 is a receptor for collagen. In Mus musculus (Mouse), this protein is Integrin alpha-11 (Itga11).